The following is a 240-amino-acid chain: Tetrahydromethanopterin S-methyltransferase subunit A (240 aa).

Residues 1 to 218 (MADKKEPAPG…KFHSGVHAGK (218 aa)) lie on the Cytoplasmic side of the membrane. Residue His85 participates in 5-hydroxybenzimidazolylcob(I)amide binding. The helical transmembrane segment at 219–239 (IEGAMIGLTVTISLLGLLLLG) threads the bilayer. Arg240 is a topological domain (extracellular).

Belongs to the MtrA family. In terms of assembly, the complex is composed of 8 subunits; MtrA, MtrB, MtrC, MtrD, MtrE, MtrF, MtrG and MtrH. It depends on 5-hydroxybenzimidazolylcob(I)amide as a cofactor.

The protein resides in the cell membrane. The enzyme catalyses 5-methyl-5,6,7,8-tetrahydromethanopterin + coenzyme M + 2 Na(+)(in) = 5,6,7,8-tetrahydromethanopterin + methyl-coenzyme M + 2 Na(+)(out). It functions in the pathway one-carbon metabolism; methanogenesis from CO(2); methyl-coenzyme M from 5,10-methylene-5,6,7,8-tetrahydromethanopterin: step 2/2. Its function is as follows. Part of a complex that catalyzes the formation of methyl-coenzyme M and tetrahydromethanopterin from coenzyme M and methyl-tetrahydromethanopterin. This is an energy-conserving, sodium-ion translocating step. The protein is Tetrahydromethanopterin S-methyltransferase subunit A of Methanosarcina barkeri (strain Fusaro / DSM 804).